Consider the following 201-residue polypeptide: MSSNLYLKRMASKLYFKITNKDECHHGFQYEDGLNILDNEFNDNPKDSCVPGRLYFTEIHHMHKYLEFGIYLREVYLPIDNPSFRMIRDSSGDKYGANMIVLGIKRDLRDKKTWEYLVSKGINLYENNALNWASKYGFLEIVKLIMENKINCYFGKAKKAYQLAITYGHTDVVDFLKTYVNTNSDYNFVLRGNDMVIYFKC.

ANK repeat units follow at residues 125–154 (YENNALNWASKYGFLEIVKLIMENKINCYF) and 156–188 (KAKKAYQLAITYGHTDVVDFLKTYVNTNSDYNF).

The sequence is that of Putative ankyrin repeat protein R868 from Acanthamoeba polyphaga (Amoeba).